Consider the following 422-residue polypeptide: Histidine--tRNA ligase (422 aa).

This sequence belongs to the class-II aminoacyl-tRNA synthetase family. Homodimer.

The protein resides in the cytoplasm. It carries out the reaction tRNA(His) + L-histidine + ATP = L-histidyl-tRNA(His) + AMP + diphosphate + H(+). This is Histidine--tRNA ligase from Onion yellows phytoplasma (strain OY-M).